The chain runs to 362 residues: Phospho-N-acetylmuramoyl-pentapeptide-transferase (362 aa).

A run of 10 helical transmembrane segments spans residues 18–38 (VFGY…AISL), 73–93 (TMGG…WGDL), 97–117 (YVWV…VDDW), 134–154 (YFWT…SATT), 160–180 (LIVP…FIAL), 200–220 (GLAI…AYVA), 237–257 (AGEL…FLWF), 264–284 (VFMG…IAVV), 289–309 (IVLF…MVQV), and 339–359 (QVVV…LSTL).

The protein belongs to the glycosyltransferase 4 family. MraY subfamily. It depends on Mg(2+) as a cofactor.

The protein resides in the cell inner membrane. It carries out the reaction UDP-N-acetyl-alpha-D-muramoyl-L-alanyl-gamma-D-glutamyl-meso-2,6-diaminopimeloyl-D-alanyl-D-alanine + di-trans,octa-cis-undecaprenyl phosphate = di-trans,octa-cis-undecaprenyl diphospho-N-acetyl-alpha-D-muramoyl-L-alanyl-D-glutamyl-meso-2,6-diaminopimeloyl-D-alanyl-D-alanine + UMP. It participates in cell wall biogenesis; peptidoglycan biosynthesis. Catalyzes the initial step of the lipid cycle reactions in the biosynthesis of the cell wall peptidoglycan: transfers peptidoglycan precursor phospho-MurNAc-pentapeptide from UDP-MurNAc-pentapeptide onto the lipid carrier undecaprenyl phosphate, yielding undecaprenyl-pyrophosphoryl-MurNAc-pentapeptide, known as lipid I. This is Phospho-N-acetylmuramoyl-pentapeptide-transferase from Azoarcus sp. (strain BH72).